Consider the following 182-residue polypeptide: MTFDQSNFKSLIRPVVDFPKPGVVFRDITPLFQSPKATRQVIDSFVQRYIDAEFSHIGVMDARGFLIGSVVAYQLNKPLVLFRKQGKLPADVLSEAYQTEYGEAYLEVHADSLCEGDSVVMFDDLIATGGTLIAAANLIRRMGAEVYEAAAIIDLPELGGSKRLNDLKIPTFCLTEFALDEQ.

Belongs to the purine/pyrimidine phosphoribosyltransferase family. Homodimer.

Its subcellular location is the cytoplasm. The enzyme catalyses AMP + diphosphate = 5-phospho-alpha-D-ribose 1-diphosphate + adenine. Its pathway is purine metabolism; AMP biosynthesis via salvage pathway; AMP from adenine: step 1/1. Its function is as follows. Catalyzes a salvage reaction resulting in the formation of AMP, that is energically less costly than de novo synthesis. This Pseudomonas syringae pv. syringae (strain B728a) protein is Adenine phosphoribosyltransferase.